The sequence spans 295 residues: ER-localized J domain-containing protein 5 (295 aa).

An N-terminal signal peptide occupies residues 1-20 (MNGYWKPALVVLGLVSLSYA). At 21-130 (FTTIETEIFQ…GFYFSRMKPK (110 aa)) the chain is on the lumenal side. In terms of domain architecture, J spans 42–110 (DMNFYKFLKL…RKIYDYYLQN (69 aa)). A helical transmembrane segment spans residues 131–151 (TWFLLAFIWIVVNIGQYIISI). The Cytoplasmic portion of the chain corresponds to 152–295 (IQYRSQRSRI…PNGKVIYSRK (144 aa)). A disordered region spans residues 259–287 (KYDGNQTKKGNKVKKGSAKKGQKKMELPN). The span at 267–280 (KGNKVKKGSAKKGQ) shows a compositional bias: basic residues.

It belongs to the DnaJ family.

Its subcellular location is the endoplasmic reticulum membrane. DnaJ-like chaperone required for the folding capacity of the endoplasmic reticulum. The protein is ER-localized J domain-containing protein 5 (ERJ5) of Saccharomyces cerevisiae (strain ATCC 204508 / S288c) (Baker's yeast).